We begin with the raw amino-acid sequence, 149 residues long: Large ribosomal subunit protein uL11 (149 aa).

The protein belongs to the universal ribosomal protein uL11 family. Part of the ribosomal stalk of the 50S ribosomal subunit. Interacts with L10 and the large rRNA to form the base of the stalk. L10 forms an elongated spine to which L12 dimers bind in a sequential fashion forming a multimeric L10(L12)X complex. Post-translationally, one or more lysine residues are methylated.

Forms part of the ribosomal stalk which helps the ribosome interact with GTP-bound translation factors. The polypeptide is Large ribosomal subunit protein uL11 (Methylobacterium radiotolerans (strain ATCC 27329 / DSM 1819 / JCM 2831 / NBRC 15690 / NCIMB 10815 / 0-1)).